The chain runs to 340 residues: Adenosine deaminase (340 aa).

Residues His15 and His17 each contribute to the Zn(2+) site. The substrate site is built by His17, Asp19, and Gly172. A Zn(2+)-binding site is contributed by His199. The active-site Proton donor is Glu202. Asp279 is a Zn(2+) binding site.

The protein belongs to the metallo-dependent hydrolases superfamily. Adenosine and AMP deaminases family. Adenosine deaminase subfamily. Zn(2+) is required as a cofactor.

The enzyme catalyses adenosine + H2O + H(+) = inosine + NH4(+). It carries out the reaction 2'-deoxyadenosine + H2O + H(+) = 2'-deoxyinosine + NH4(+). Its function is as follows. Catalyzes the hydrolytic deamination of adenosine and 2-deoxyadenosine. The polypeptide is Adenosine deaminase (Streptococcus agalactiae serotype III (strain NEM316)).